Reading from the N-terminus, the 118-residue chain is MAEKRTLIAVIADEDTTTGLLLAGIGQITPETQEKNFFVYQEGKTTKEEITDKFNHFTEERDDIAILLINQHIAENIRARVDSFTNAFPAILEIPSKDHPYDPEKDSVLKRVRKLFGE.

This sequence belongs to the V-ATPase F subunit family. V-ATPase is a heteromultimeric enzyme composed of a peripheral catalytic V1 complex (components A to H) attached to an integral membrane V0 proton pore complex (components: a, c, c', c'', d, e, f and VOA1).

The protein resides in the vacuole membrane. Subunit of the V1 complex of vacuolar(H+)-ATPase (V-ATPase), a multisubunit enzyme composed of a peripheral complex (V1) that hydrolyzes ATP and a membrane integral complex (V0) that translocates protons. V-ATPase is responsible for acidifying and maintaining the pH of intracellular compartments. In Saccharomyces cerevisiae (strain ATCC 204508 / S288c) (Baker's yeast), this protein is V-type proton ATPase subunit F.